The following is a 207-amino-acid chain: 2,3-bisphosphoglycerate-dependent phosphoglycerate mutase (207 aa).

Residues R10–N17, T23–G24, R62, E89–Y92, K100, R116–R117, and G160–N161 contribute to the substrate site. H11 (tele-phosphohistidine intermediate) is an active-site residue. Catalysis depends on E89, which acts as the Proton donor/acceptor.

It belongs to the phosphoglycerate mutase family. BPG-dependent PGAM subfamily. As to quaternary structure, homodimer.

The catalysed reaction is (2R)-2-phosphoglycerate = (2R)-3-phosphoglycerate. The protein operates within carbohydrate degradation; glycolysis; pyruvate from D-glyceraldehyde 3-phosphate: step 3/5. Functionally, catalyzes the interconversion of 2-phosphoglycerate and 3-phosphoglycerate. The chain is 2,3-bisphosphoglycerate-dependent phosphoglycerate mutase from Rhodopseudomonas palustris (strain BisB18).